Consider the following 1361-residue polypeptide: Protein transport protein SEC16B homolog (1361 aa).

Residue S46 is modified to Phosphoserine. Disordered regions lie at residues 82–109 (NEGASGSVGEDEPSSIAPEAVQFPHSDA), 487–513 (VDDAPQSFQSSQLFSPSAGRSSDGRPP), 984–1013 (PVGGMPPPAPHSTKGNLQGNEYQHQQQEAT), 1025–1062 (SSLMPPASVEPTHESGGSGRRMAVHTRSVSEPDFGRTP), 1163–1204 (ENKS…ARGR), 1216–1235 (NPPGRGNSHTMIPSPSVQTA), and 1306–1361 (SVNG…EVEL). A compositionally biased stretch (low complexity) spans 491–503 (PQSFQSSQLFSPS). Polar residues predominate over residues 996–1013 (TKGNLQGNEYQHQQQEAT). Polar residues-rich tracts occupy residues 1169–1200 (IPSNGNWSSGGPTPSENSSGIPPISHGSNQFS), 1222–1234 (NSHTMIPSPSVQT), and 1308–1325 (NGDNHQPPTSRRTASWSG). The segment covering 1326–1354 (NFNTSFTPPTSPSTFKPVLLNSSSSSLGE) has biased composition (low complexity).

The protein belongs to the SEC16 family.

It is found in the golgi apparatus. The protein localises to the endoplasmic reticulum. Its function is as follows. Required for protein transport from the endoplasmic reticulum to the Golgi apparatus. The polypeptide is Protein transport protein SEC16B homolog (Arabidopsis thaliana (Mouse-ear cress)).